The primary structure comprises 413 residues: Putative competence-damage inducible protein (413 aa).

This sequence belongs to the CinA family.

The protein is Putative competence-damage inducible protein of Lacticaseibacillus casei (strain BL23) (Lactobacillus casei).